An 860-amino-acid chain; its full sequence is Leucine--tRNA ligase (860 aa).

Residues 42–52 (PYPSGRLHMGH) carry the 'HIGH' region motif. A 'KMSKS' region motif is present at residues 619–623 (KMSKS). Lys-622 contributes to the ATP binding site.

It belongs to the class-I aminoacyl-tRNA synthetase family.

The protein resides in the cytoplasm. The enzyme catalyses tRNA(Leu) + L-leucine + ATP = L-leucyl-tRNA(Leu) + AMP + diphosphate. In Escherichia coli O81 (strain ED1a), this protein is Leucine--tRNA ligase.